We begin with the raw amino-acid sequence, 494 residues long: E3 ubiquitin-protein ligase ari-1.1 (494 aa).

Residues 1-30 are compositionally biased toward acidic residues; that stretch reads MSSDDEINMDDSDSSQGEIDDGCMSDDDGI. A disordered region spans residues 1-52; that stretch reads MSSDDEINMDDSDSSQGEIDDGCMSDDDGIVLESREQNSSDYKDNGEPDNEV. Residues 33-52 show a composition bias toward basic and acidic residues; it reads ESREQNSSDYKDNGEPDNEV. The TRIAD supradomain stretch occupies residues 124–331; it reads GDAECDICCS…SSWYSCNRFD (208 aa). Zn(2+)-binding residues include C128, C131, C142, H144, C147, C150, C169, C174, C214, C219, C235, C237, C242, C245, H250, C255, C282, and C285. The RING-type 1 zinc-finger motif lies at 128–174; that stretch reads CDICCSLGELSGLSCNHRACTQCWKAYLTNKIANNAQSEIECMAPNC. The segment at 194–255 adopts an IBR-type zinc-finger fold; it reads ATYRKLIVAS…GHDWHEPVNC (62 aa). The segment at 282–313 adopts an RING-type 2; atypical zinc-finger fold; the sequence is CPKCMITIEKDGGCNHMTCKNTACRFEFCWMC. C295 is a catalytic residue. Residues C300, C305, C310, C313, H320, and C327 each contribute to the Zn(2+) site. The interval 346–494 is ariadne domain; that stretch reads RANLQRYLFY…ADQELWVFNE (149 aa).

The protein belongs to the RBR family. Ariadne subfamily. Interacts with ubiquitin-conjugating enzyme E2 ubc-18.

The protein localises to the nucleus. The protein resides in the cytoplasm. It catalyses the reaction [E2 ubiquitin-conjugating enzyme]-S-ubiquitinyl-L-cysteine + [acceptor protein]-L-lysine = [E2 ubiquitin-conjugating enzyme]-L-cysteine + [acceptor protein]-N(6)-ubiquitinyl-L-lysine.. Its activity is regulated as follows. Autoinhibited by the ariadne domain, which masks the second RING-type zinc finger that contains the active site and inhibits the E3 activity. Functionally, E3 ubiquitin-protein transferase, which catalyzes ubiquitination of target proteins together with ubiquitin-conjugating enzyme E2 ubc-18. Acts with ubc-18 to regulate pharyngeal development. The polypeptide is E3 ubiquitin-protein ligase ari-1.1 (Caenorhabditis elegans).